Reading from the N-terminus, the 680-residue chain is DNA-directed RNA polymerase subunit beta' (680 aa).

Positions 69, 71, 87, and 90 each coordinate Zn(2+). Residues D489, D491, and D493 each coordinate Mg(2+).

The protein belongs to the RNA polymerase beta' chain family. RpoC1 subfamily. In plastids the minimal PEP RNA polymerase catalytic core is composed of four subunits: alpha, beta, beta', and beta''. When a (nuclear-encoded) sigma factor is associated with the core the holoenzyme is formed, which can initiate transcription. The cofactor is Mg(2+). Zn(2+) serves as cofactor.

The protein resides in the plastid. The protein localises to the chloroplast. The catalysed reaction is RNA(n) + a ribonucleoside 5'-triphosphate = RNA(n+1) + diphosphate. Functionally, DNA-dependent RNA polymerase catalyzes the transcription of DNA into RNA using the four ribonucleoside triphosphates as substrates. This chain is DNA-directed RNA polymerase subunit beta', found in Capsella bursa-pastoris (Shepherd's purse).